The following is a 40-amino-acid chain: uncharacterized protein (40 aa).

This is an uncharacterized protein from Saccharomyces cerevisiae (strain ATCC 204508 / S288c) (Baker's yeast).